Reading from the N-terminus, the 193-residue chain is Holliday junction branch migration complex subunit RuvA (193 aa).

Residues M1–L64 are domain I. The interval T65–L139 is domain II. Positions L139–A143 are flexible linker. The tract at residues S144–A193 is domain III.

This sequence belongs to the RuvA family. Homotetramer. Forms an RuvA(8)-RuvB(12)-Holliday junction (HJ) complex. HJ DNA is sandwiched between 2 RuvA tetramers; dsDNA enters through RuvA and exits via RuvB. An RuvB hexamer assembles on each DNA strand where it exits the tetramer. Each RuvB hexamer is contacted by two RuvA subunits (via domain III) on 2 adjacent RuvB subunits; this complex drives branch migration. In the full resolvosome a probable DNA-RuvA(4)-RuvB(12)-RuvC(2) complex forms which resolves the HJ.

It localises to the cytoplasm. In terms of biological role, the RuvA-RuvB-RuvC complex processes Holliday junction (HJ) DNA during genetic recombination and DNA repair, while the RuvA-RuvB complex plays an important role in the rescue of blocked DNA replication forks via replication fork reversal (RFR). RuvA specifically binds to HJ cruciform DNA, conferring on it an open structure. The RuvB hexamer acts as an ATP-dependent pump, pulling dsDNA into and through the RuvAB complex. HJ branch migration allows RuvC to scan DNA until it finds its consensus sequence, where it cleaves and resolves the cruciform DNA. This is Holliday junction branch migration complex subunit RuvA from Burkholderia mallei (strain NCTC 10229).